Reading from the N-terminus, the 892-residue chain is Translation initiation factor IF-2 (892 aa).

Residues 88–305 (KKRTFVKRDP…SLQQGFQKPA (218 aa)) form a disordered region. 2 stretches are compositionally biased toward basic and acidic residues: residues 93 to 159 (VKRD…KDKV) and 166 to 216 (DMTK…EENK). The span at 254-269 (GRGRNAKAARPAKKGK) shows a compositional bias: basic residues. Over residues 270-282 (HAESKADREEARA) the composition is skewed to basic and acidic residues. Residues 391-560 (PRAPVVTIMG…LLQAEVLELK (170 aa)) form the tr-type G domain. Positions 400–407 (GHVDHGKT) are G1. 400–407 (GHVDHGKT) contributes to the GTP binding site. Residues 425 to 429 (GITQH) form a G2 region. A G3 region spans residues 446–449 (DTPG). GTP-binding positions include 446-450 (DTPGH) and 500-503 (NKID). The tract at residues 500–503 (NKID) is G4. The G5 stretch occupies residues 536 to 538 (SAK).

The protein belongs to the TRAFAC class translation factor GTPase superfamily. Classic translation factor GTPase family. IF-2 subfamily.

The protein localises to the cytoplasm. One of the essential components for the initiation of protein synthesis. Protects formylmethionyl-tRNA from spontaneous hydrolysis and promotes its binding to the 30S ribosomal subunits. Also involved in the hydrolysis of GTP during the formation of the 70S ribosomal complex. This Salmonella paratyphi A (strain ATCC 9150 / SARB42) protein is Translation initiation factor IF-2.